The following is a 475-amino-acid chain: Ribulose bisphosphate carboxylase large chain (475 aa).

The propeptide occupies 1–2 (MS). Pro3 carries the post-translational modification N-acetylproline. Lys14 carries the N6,N6,N6-trimethyllysine modification. Substrate is bound by residues Asn123 and Thr173. Lys175 functions as the Proton acceptor in the catalytic mechanism. Lys177 is a binding site for substrate. 3 residues coordinate Mg(2+): Lys201, Asp203, and Glu204. Lys201 is modified (N6-carboxylysine). His294 functions as the Proton acceptor in the catalytic mechanism. The substrate site is built by Arg295, His327, and Ser379.

Belongs to the RuBisCO large chain family. Type I subfamily. In terms of assembly, heterohexadecamer of 8 large chains and 8 small chains; disulfide-linked. The disulfide link is formed within the large subunit homodimers. The cofactor is Mg(2+). In terms of processing, the disulfide bond which can form in the large chain dimeric partners within the hexadecamer appears to be associated with oxidative stress and protein turnover.

The protein localises to the plastid. Its subcellular location is the chloroplast. The catalysed reaction is 2 (2R)-3-phosphoglycerate + 2 H(+) = D-ribulose 1,5-bisphosphate + CO2 + H2O. It carries out the reaction D-ribulose 1,5-bisphosphate + O2 = 2-phosphoglycolate + (2R)-3-phosphoglycerate + 2 H(+). Its function is as follows. RuBisCO catalyzes two reactions: the carboxylation of D-ribulose 1,5-bisphosphate, the primary event in carbon dioxide fixation, as well as the oxidative fragmentation of the pentose substrate in the photorespiration process. Both reactions occur simultaneously and in competition at the same active site. The chain is Ribulose bisphosphate carboxylase large chain from Pinus edulis (Pinyon pine).